A 474-amino-acid chain; its full sequence is ERO1-like protein alpha (474 aa).

A signal peptide spans 1 to 29 (MVSGCCRLDMSSYVSVLVLCSLLLWGSNS). Intrachain disulfides connect Cys40/Cys53, Cys42/Cys51, Cys90/Cys398, Cys99/Cys104, Cys99/Cys138, Cys104/Cys109, Cys215/Cys248, and Cys401/Cys404. 3 residues coordinate FAD: Arg194, Thr196, and Trp207. Residues Ser259, His262, Arg294, and Arg307 each coordinate FAD. Asn340 and Asn391 each carry an N-linked (GlcNAc...) asparagine glycan. Residue Asn430 is glycosylated (N-linked (GlcNAc...) asparagine).

This sequence belongs to the EROs family. As to quaternary structure, predominantly monomer. May function both as a monomer and a homodimer. FAD is required as a cofactor. In terms of processing, the Cys-99/Cys-104 and Cys-401/Cys-404 disulfide bonds constitute the redox-active center. The Cys-99/Cys-104 disulfide bond may accept electron from protein disulfide isomerase (PDI) and funnel them to the active site disulfide Cys-401/Cys-404.

Its subcellular location is the endoplasmic reticulum membrane. With respect to regulation, enzyme activity is tightly regulated to prevent the accumulation of reactive oxygen species in the endoplasmic reticulum. Reversibly down-regulated by the formation of disulfide bonds between the active site Cys-99 and Cys-138, and between Cys-104 and Cys-109. Glutathione may be required to regulate its activity in the endoplasmic reticulum. In terms of biological role, oxidoreductase involved in disulfide bond formation in the endoplasmic reticulum. Efficiently reoxidizes P4HB/PDI, the enzyme catalyzing protein disulfide formation, in order to allow P4HB to sustain additional rounds of disulfide formation. Following P4HB reoxidation, passes its electrons to molecular oxygen via FAD, leading to the production of reactive oxygen species (ROS) in the cell. Required for the folding of immunoglobulins. This Xenopus tropicalis (Western clawed frog) protein is ERO1-like protein alpha.